The sequence spans 422 residues: Elongation factor 1-alpha (422 aa).

The region spanning 5 to 221 (KPHMNLAVIG…NSLKEPEKPS (217 aa)) is the tr-type G domain. A G1 region spans residues 14–21 (GHIDHGKS). GTP is bound at residue 14–21 (GHIDHGKS). Mg(2+) is bound at residue Ser-21. Residues 70-74 (GITID) are G2. Residues 91–94 (DCPG) form a G3 region. GTP contacts are provided by residues 91 to 95 (DCPGH) and 146 to 149 (NKMD). The G4 stretch occupies residues 146–149 (NKMD). Residues 185–187 (SAF) form a G5 region.

It belongs to the TRAFAC class translation factor GTPase superfamily. Classic translation factor GTPase family. EF-Tu/EF-1A subfamily.

It localises to the cytoplasm. The catalysed reaction is GTP + H2O = GDP + phosphate + H(+). GTP hydrolase that promotes the GTP-dependent binding of aminoacyl-tRNA to the A-site of ribosomes during protein biosynthesis. This Methanosarcina mazei (strain ATCC BAA-159 / DSM 3647 / Goe1 / Go1 / JCM 11833 / OCM 88) (Methanosarcina frisia) protein is Elongation factor 1-alpha.